Consider the following 69-residue polypeptide: uncharacterized protein (69 aa).

Residues 21–42 (MYAANKKSDARRRGKVGKEQWE) form a disordered region. Residues 35–69 (KVGKEQWEKEMEQYNIQKAQFEKELKEKKEKELKK) are a coiled coil.

This is an uncharacterized protein from Acheta domesticus (House cricket).